The chain runs to 138 residues: Phospholipase A2 EC1 (138 aa).

The first 16 residues, 1–16 (MRTLWIVAVWLMSVEG), serve as a signal peptide directing secretion. Cystine bridges form between cysteine 42/cysteine 131, cysteine 44/cysteine 60, cysteine 59/cysteine 111, cysteine 65/cysteine 138, cysteine 66/cysteine 104, cysteine 73/cysteine 97, and cysteine 91/cysteine 102. Ca(2+)-binding residues include tyrosine 43, glycine 45, and glycine 47. Histidine 63 is a catalytic residue. Aspartate 64 lines the Ca(2+) pocket. Aspartate 105 is a catalytic residue.

It belongs to the phospholipase A2 family. Group II subfamily. The cofactor is Ca(2+).

It is found in the secreted. The enzyme catalyses a 1,2-diacyl-sn-glycero-3-phosphocholine + H2O = a 1-acyl-sn-glycero-3-phosphocholine + a fatty acid + H(+). This is Phospholipase A2 EC1 from Echis coloratus (Carpet viper).